A 1023-amino-acid polypeptide reads, in one-letter code: FHIP family protein AGAP011705 (1023 aa).

Polar residues-rich tracts occupy residues 1-13 (MSWL…RQSF), 806-825 (SMTS…SSSY), and 868-888 (GLNH…ASMN). 2 disordered regions span residues 1–39 (MSWL…AGGG) and 797–927 (GKLL…AETQ). A compositionally biased stretch (low complexity) spans 889–906 (VPSPVGQQQHQHQSVSSV).

It belongs to the FHIP family.

This Anopheles gambiae (African malaria mosquito) protein is FHIP family protein AGAP011705.